The sequence spans 201 residues: Small ribosomal subunit protein uS4 (201 aa).

The interval Met-1–Arg-38 is disordered. In terms of domain architecture, S4 RNA-binding spans Ser-91–Ala-157.

This sequence belongs to the universal ribosomal protein uS4 family. Part of the 30S ribosomal subunit. Contacts protein S5. The interaction surface between S4 and S5 is involved in control of translational fidelity.

In terms of biological role, one of the primary rRNA binding proteins, it binds directly to 16S rRNA where it nucleates assembly of the body of the 30S subunit. With S5 and S12 plays an important role in translational accuracy. The protein is Small ribosomal subunit protein uS4 of Mycobacterium sp. (strain JLS).